The sequence spans 65 residues: Large ribosomal subunit protein bL35 (65 aa).

This sequence belongs to the bacterial ribosomal protein bL35 family.

The protein is Large ribosomal subunit protein bL35 of Aeromonas salmonicida (strain A449).